The chain runs to 187 residues: Elongation factor P (187 aa).

Belongs to the elongation factor P family.

It is found in the cytoplasm. Its pathway is protein biosynthesis; polypeptide chain elongation. In terms of biological role, involved in peptide bond synthesis. Stimulates efficient translation and peptide-bond synthesis on native or reconstituted 70S ribosomes in vitro. Probably functions indirectly by altering the affinity of the ribosome for aminoacyl-tRNA, thus increasing their reactivity as acceptors for peptidyl transferase. The chain is Elongation factor P from Bifidobacterium animalis subsp. lactis (strain AD011).